The sequence spans 388 residues: (S)-8-oxocitronellyl enol synthase ISY1 (388 aa).

NADP(+)-binding positions include T35–I37, R63–R64, D81–V82, T105–W106, and Q143. Catalysis depends on residues K147 and Y178. NADP(+) contacts are provided by residues Y178, I205, and S212 to M214.

The protein belongs to the short-chain dehydrogenases/reductases (SDR) family.

The catalysed reaction is (S)-8-oxocitronellyl enol + NADP(+) = (6E)-8-oxogeranial + NADPH + H(+). The enzyme catalyses (S)-8-oxocitronellyl enol + NAD(+) = (6E)-8-oxogeranial + NADH + H(+). Functionally, iridoid synthase that catalyzes the first step in generation of the iridoid ring scaffold using the linear monoterpene (6E)-8-oxogeranial as substrate. Iridoids comprise a large family of distinctive bicyclic monoterpenes that possess a wide range of pharmacological activities, including anticancer, anti-inflammatory, antifungal and antibacterial activities. Catalyzes the conversion of the linear monoterpene (6E)-8-oxogeranial to (S)-8-oxocitronellyl enol, a precursor of nepetalactones, which are metabolites that are both insect-repellent and have euphoric effect in cats. This is (S)-8-oxocitronellyl enol synthase ISY1 from Nepeta cataria (Catnip).